The chain runs to 347 residues: D-alanine--D-alanine ligase (347 aa).

The 199-residue stretch at 134–332 (KLYAKDLGVK…LAQSLPKTPK (199 aa)) folds into the ATP-grasp domain. 161-216 (LIGFNFPFIVKPSNAGSSLGVNVVKEEKELIYALDSAFEYSKEVLIEPFIQGVKEY) serves as a coordination point for ATP. Mg(2+) is bound by residues D288, E300, and N302.

This sequence belongs to the D-alanine--D-alanine ligase family. Mg(2+) serves as cofactor. Mn(2+) is required as a cofactor.

Its subcellular location is the cytoplasm. It catalyses the reaction 2 D-alanine + ATP = D-alanyl-D-alanine + ADP + phosphate + H(+). The protein operates within cell wall biogenesis; peptidoglycan biosynthesis. Functionally, cell wall formation. This Helicobacter pylori (strain J99 / ATCC 700824) (Campylobacter pylori J99) protein is D-alanine--D-alanine ligase.